The primary structure comprises 636 residues: Interleukin-27 receptor subunit alpha (636 aa).

The signal sequence occupies residues 1-32 (MRGGRGAPFWLWPLPKLALLPLLWVLFQRTRP). Over 33-516 (QGSAGPLQCY…HLPDNTLRWK (484 aa)) the chain is Extracellular. N-linked (GlcNAc...) asparagine glycosylation is found at Asn-51 and Asn-76. One can recognise a Fibronectin type-III 1 domain in the interval 131–231 (PRLGPDVDFS…PILSFQTPPS (101 aa)). The WSXWS motif signature appears at 217-221 (WGEWS). N-linked (GlcNAc...) asparagine glycosylation is found at Asn-302, Asn-311, Asn-374, Asn-382, and Asn-467. 2 Fibronectin type-III domains span residues 322–417 (APRS…LAPL) and 419–511 (GPTL…LPDN). A helical transmembrane segment spans residues 517 to 537 (VLPGILFLWGLFLLGCGLSLA). Residues 538–636 (TSGRCYHLRH…LGPPRPQVLA (99 aa)) lie on the Cytoplasmic side of the membrane. Positions 554–562 (VWEKVPDPA) match the Box 1 motif motif. The tract at residues 587–636 (EVEEMEPPPVMESSQPAQATAPLDSGYEKHFLPTPEELGLLGPPRPQVLA) is disordered. The span at 618–628 (LPTPEELGLLG) shows a compositional bias: low complexity.

It belongs to the type I cytokine receptor family. Type 2 subfamily. As to quaternary structure, component of a receptor complex composed of IL6ST/GP130, IL27RA/WSX1 and CNTFR which interacts with the neuroprotective peptide humanin. Highly expressed in lymphoid tissues such as spleen, lymph nodes and peripheral blood leukocytes. Weakly expressed in other tissues examined including heart, brain, fetal and adult lung, liver, skeletal muscle, kidney, pancreas, prostate, testis, ovary, small intestine, kidney and colon. In the lymphoid system, higher level expression in CD4+ T-cell subsets than in CD8+ T-cell subsets. Also weaker expression in CD19+ B-cells and monocytes.

It is found in the membrane. Receptor for IL27. Requires IL6ST/GP130 to mediate signal transduction in response to IL27. This signaling system acts through STAT3 and STAT1. Acts as a receptor for the neuroprotective peptide humanin as part of a complex with IL6ST/GP130 and CNTFR. Involved in the regulation of Th1-type immune responses. Also appears to be involved in innate defense mechanisms. This Homo sapiens (Human) protein is Interleukin-27 receptor subunit alpha (IL27RA).